Consider the following 249-residue polypeptide: tRNA pseudouridine synthase A (249 aa).

Catalysis depends on Asp-53, which acts as the Nucleophile. Substrate is bound at residue Tyr-111.

Belongs to the tRNA pseudouridine synthase TruA family. In terms of assembly, homodimer.

It carries out the reaction uridine(38/39/40) in tRNA = pseudouridine(38/39/40) in tRNA. Functionally, formation of pseudouridine at positions 38, 39 and 40 in the anticodon stem and loop of transfer RNAs. The sequence is that of tRNA pseudouridine synthase A from Streptococcus equi subsp. equi (strain 4047).